A 441-amino-acid chain; its full sequence is G2/mitotic-specific cyclin-2 (441 aa).

This sequence belongs to the cyclin family. Cyclin AB subfamily. In terms of assembly, interacts with the CDC2 and CDK2 protein kinases to form a serine/threonine kinase holoenzyme complex. The cyclin subunit imparts substrate specificity to the complex.

Essential for the control of the cell cycle at the G2/M (mitosis) transition. G2/M cyclins accumulate steadily during G2 and are abruptly destroyed at mitosis. This is G2/mitotic-specific cyclin-2 from Antirrhinum majus (Garden snapdragon).